Reading from the N-terminus, the 384-residue chain is Glucans biosynthesis protein C (384 aa).

10 helical membrane passes run 17–37 (AWLMLLGIPFHISLIYSTHSW), 54–74 (FIHAFRMQVFFVISGYFSYML), 91–111 (VGIPMLTAIPLLTLPQFILLQ), 140–160 (LWFLLVLVILTTVSIGIFTWF), 173–193 (AISLVRLSLIFFLLGMAYAAI), 212–232 (FIVMQTLFYVPFFILGALAFI), 240–260 (FTTPSRGCTLGAAVAFIAYLL), 274–294 (TESVITMVMGLWMVNVVFSLG), 311–331 (ASLFIYLVHHPLTLFFGAYIT), and 338–358 (LIGFLCGLIFVMGIALILYEI).

The protein belongs to the acyltransferase 3 family. OpgC subfamily.

The protein localises to the cell membrane. Its pathway is glycan metabolism; osmoregulated periplasmic glucan (OPG) biosynthesis. Functionally, necessary for the succinyl substitution of periplasmic glucans. Could catalyze the transfer of succinyl residues from the cytoplasmic side of the membrane to the nascent glucan backbones on the periplasmic side of the membrane. This Salmonella choleraesuis (strain SC-B67) protein is Glucans biosynthesis protein C.